Reading from the N-terminus, the 252-residue chain is MVKIGKVEMYINEELESGKKLHFVLIDPDDTHPEMAGRIAELCENVGVNAIMVGGSTGAEGEMLDNVVKAIKESSSLPVILFPGSHSGISKYADAIFFMSLLNSRNPFFITGAQALGAFTVKRYGLEPIPMAYIIVEPGETVGWVGDAKPIPRHKPKLAAAYALAGQYLGMRLVYLEAGSGSPEPVPPEMVRIVKSVIDVPLIVGGGIRTGDQVRELTKAGADIIVTGTAIESTKSIDEAKRKLEEIRRGLK.

Residues D27 and S56 each contribute to the Mg(2+) site. Sn-glycerol 1-phosphate contacts are provided by residues 175-181 (YLEAGSG), 206-207 (GG), and 228-229 (GT).

It belongs to the GGGP/HepGP synthase family. Group II subfamily. The cofactor is Mg(2+).

It localises to the cytoplasm. The enzyme catalyses sn-glycerol 1-phosphate + (2E,6E,10E)-geranylgeranyl diphosphate = sn-3-O-(geranylgeranyl)glycerol 1-phosphate + diphosphate. Its pathway is membrane lipid metabolism; glycerophospholipid metabolism. Its function is as follows. Prenyltransferase that catalyzes the transfer of the geranylgeranyl moiety of geranylgeranyl diphosphate (GGPP) to the C3 hydroxyl of sn-glycerol-1-phosphate (G1P). This reaction is the first ether-bond-formation step in the biosynthesis of archaeal membrane lipids. The polypeptide is Geranylgeranylglyceryl phosphate synthase (Pyrococcus abyssi (strain GE5 / Orsay)).